Reading from the N-terminus, the 258-residue chain is Regulatory protein RecX (258 aa).

Belongs to the RecX family.

The protein localises to the cytoplasm. Functionally, modulates RecA activity. This is Regulatory protein RecX from Streptococcus sanguinis (strain SK36).